A 172-amino-acid polypeptide reads, in one-letter code: AIG2-like protein B (172 aa).

15–20 (YGSFQE) serves as a coordination point for substrate. Catalysis depends on E83, which acts as the Proton acceptor. Positions 146 to 165 (KRNPQGKGRDDFSNVLKEED) are enriched in basic and acidic residues. Positions 146–172 (KRNPQGKGRDDFSNVLKEEDPANAPSS) are disordered.

The protein belongs to the gamma-glutamylcyclotransferase family. Expressed in flowerss, leaves, stems, seeds and roots.

Its subcellular location is the cell membrane. In terms of biological role, putative gamma-glutamylcyclotransferase. This chain is AIG2-like protein B, found in Arabidopsis thaliana (Mouse-ear cress).